Here is a 341-residue protein sequence, read N- to C-terminus: Uroporphyrinogen decarboxylase (341 aa).

Residues 23–27 (RQAGR), Asp73, Tyr147, Ser202, and His318 each bind substrate.

Belongs to the uroporphyrinogen decarboxylase family. Homodimer.

The protein localises to the cytoplasm. It catalyses the reaction uroporphyrinogen III + 4 H(+) = coproporphyrinogen III + 4 CO2. It participates in porphyrin-containing compound metabolism; protoporphyrin-IX biosynthesis; coproporphyrinogen-III from 5-aminolevulinate: step 4/4. Its function is as follows. Catalyzes the decarboxylation of four acetate groups of uroporphyrinogen-III to yield coproporphyrinogen-III. The polypeptide is Uroporphyrinogen decarboxylase (Novosphingobium aromaticivorans (strain ATCC 700278 / DSM 12444 / CCUG 56034 / CIP 105152 / NBRC 16084 / F199)).